Consider the following 108-residue polypeptide: Nucleoid-associated protein Bmul_1447/BMULJ_01796 (108 aa).

Residues 84 to 108 (EATSQEKMSGMTSGLPLPPGFKLPF) are disordered. Positions 85 to 95 (ATSQEKMSGMT) are enriched in polar residues. Pro residues predominate over residues 99 to 108 (PLPPGFKLPF).

This sequence belongs to the YbaB/EbfC family. As to quaternary structure, homodimer.

Its subcellular location is the cytoplasm. It localises to the nucleoid. In terms of biological role, binds to DNA and alters its conformation. May be involved in regulation of gene expression, nucleoid organization and DNA protection. This Burkholderia multivorans (strain ATCC 17616 / 249) protein is Nucleoid-associated protein Bmul_1447/BMULJ_01796.